The primary structure comprises 222 residues: UPF0758 protein YicR (222 aa).

In terms of domain architecture, MPN spans 100-222 (PLLSPEMTRE…YVSFAERGWI (123 aa)). Residues histidine 171, histidine 173, and aspartate 184 each contribute to the Zn(2+) site. Residues 171–184 (HNHPSGCAEPSKAD) carry the JAMM motif motif.

The protein belongs to the UPF0758 family. YicR subfamily.

In Escherichia coli O45:K1 (strain S88 / ExPEC), this protein is UPF0758 protein YicR.